Here is a 72-residue protein sequence, read N- to C-terminus: Heat-stable enterotoxin A3/A4 (72 aa).

Positions 1-19 (MKKSILFIFLSVLSFSPFA) are cleaved as a signal peptide. Residues 20-53 (QDAKPVESSKEKITLESKKCNIAKKSNKSGPESM) constitute a propeptide that is removed on maturation. Disulfide bonds link C59–C64, C60–C68, and C63–C71.

Belongs to the heat-stable enterotoxin family.

It localises to the secreted. Toxin which activates the particulate form of guanylate cyclase and increases cyclic GMP levels within the host intestinal epithelial cells. This Escherichia coli protein is Heat-stable enterotoxin A3/A4 (sta3).